The sequence spans 511 residues: Early growth response protein 1 (511 aa).

Disordered regions lie at residues 133-169 (ASIP…LSCS) and 291-312 (PSRM…RPYA). Low complexity predominate over residues 137–169 (SSTSQATHPSSSSTSSIPSSSSSSTSSASLSCS). 3 consecutive C2H2-type zinc fingers follow at residues 311-335 (YACP…IRIH), 341-363 (FQCR…IRTH), and 369-391 (FACE…TKIH). Positions 384–406 (RKRHTKIHMRQKDKKAEKGATAA) are disordered. The segment covering 386 to 396 (RHTKIHMRQKD) has biased composition (basic residues).

Belongs to the EGR C2H2-type zinc-finger protein family. In terms of tissue distribution, detected in muscle and brain.

The protein resides in the nucleus. The protein localises to the cytoplasm. In terms of biological role, transcriptional regulator. Recognizes and binds to the DNA sequence 5'-GCG(T/G)GGGCG-3'(EGR-site) in the promoter region of target genes. Binds double-stranded target DNA, irrespective of the cytosine methylation status. Regulates the transcription of numerous target genes, and thereby plays an important role in regulating the response to growth factors, DNA damage, and ischemia. Plays a role in the regulation of cell survival, proliferation and cell death. Mediates responses to ischemia and hypoxia; regulates the expression of proteins that are involved in inflammatory processes. Plays a role in regulating the expression of circadian clock genes. Plays a role in the organization of Muller glia cells in the inner and outer plexiform layers of the retina. The polypeptide is Early growth response protein 1 (egr1) (Danio rerio (Zebrafish)).